Reading from the N-terminus, the 277-residue chain is Putative gamma-glutamylcyclotransferase YkqA (277 aa).

Substrate is bound at residue Tyr8–Leu11. The active-site Proton acceptor is the Glu205.

The protein belongs to the gamma-glutamylcyclotransferase family.

Putative gamma-glutamylcyclotransferase. The protein is Putative gamma-glutamylcyclotransferase YkqA (ykqA) of Bacillus subtilis (strain 168).